A 374-amino-acid chain; its full sequence is Histidinol-phosphate aminotransferase 1 (374 aa).

An N6-(pyridoxal phosphate)lysine modification is found at Lys-232.

It belongs to the class-II pyridoxal-phosphate-dependent aminotransferase family. Histidinol-phosphate aminotransferase subfamily. In terms of assembly, homodimer. Requires pyridoxal 5'-phosphate as cofactor.

The catalysed reaction is L-histidinol phosphate + 2-oxoglutarate = 3-(imidazol-4-yl)-2-oxopropyl phosphate + L-glutamate. It participates in amino-acid biosynthesis; L-histidine biosynthesis; L-histidine from 5-phospho-alpha-D-ribose 1-diphosphate: step 7/9. This is Histidinol-phosphate aminotransferase 1 (hisC1) from Ralstonia nicotianae (strain ATCC BAA-1114 / GMI1000) (Ralstonia solanacearum).